A 563-amino-acid chain; its full sequence is Probable ganciclovir kinase (563 aa).

Positions 1 to 16 (MDNGVETPQGQKTQPI) are enriched in polar residues. Residues 1–33 (MDNGVETPQGQKTQPINLPPDRKRLRKHDGLGK) are disordered. ATP is bound by residues 202 to 210 (LGVGAYGKV) and Lys-219. Residue Asp-314 is the Proton acceptor of the active site.

The protein belongs to the protein kinase superfamily. Tyr protein kinase family. HCMV ganciclovir subfamily.

Its function is as follows. Phosphorylates the antiviral nucleoside analog ganciclovir. This chain is Probable ganciclovir kinase (U69), found in Human herpesvirus 6B (strain Z29) (HHV-6 variant B).